Reading from the N-terminus, the 600-residue chain is Fructan 1-exohydrolase (600 aa).

The N-terminal stretch at 1–27 (MAQAWAFLLPVLFFGSYVTNLFLPTYA) is a signal peptide. The active site involves aspartate 73. Asparagine 166, asparagine 234, and asparagine 246 each carry an N-linked (GlcNAc...) asparagine glycan. Residues cysteine 444 and cysteine 490 are joined by a disulfide bond. Residue asparagine 565 is glycosylated (N-linked (GlcNAc...) asparagine).

It belongs to the glycosyl hydrolase 32 family.

The catalysed reaction is Hydrolysis of terminal, non-reducing (2-&gt;1)-linked beta-D-fructofuranose residues in fructans.. Its activity is regulated as follows. Inhibited by sucrose. Hydrolyzes inulin-type beta-(2,1)-fructans. May play a role as a beta-(2,1)-trimmer during graminan biosynthesis. The chain is Fructan 1-exohydrolase from Leymus chinensis (Chinese lyme grass).